A 351-amino-acid chain; its full sequence is Glycerol-3-phosphate dehydrogenase [NAD(P)+] (351 aa).

Residues S12, W13, H33, and K114 each coordinate NADPH. Sn-glycerol 3-phosphate-binding residues include K114, G145, and S147. A149 contributes to the NADPH binding site. Residues K200, D253, S263, R264, and N265 each contribute to the sn-glycerol 3-phosphate site. K200 (proton acceptor) is an active-site residue. Position 264 (R264) interacts with NADPH. Residues V288 and E290 each contribute to the NADPH site.

It belongs to the NAD-dependent glycerol-3-phosphate dehydrogenase family.

The protein localises to the cytoplasm. The catalysed reaction is sn-glycerol 3-phosphate + NAD(+) = dihydroxyacetone phosphate + NADH + H(+). The enzyme catalyses sn-glycerol 3-phosphate + NADP(+) = dihydroxyacetone phosphate + NADPH + H(+). It functions in the pathway membrane lipid metabolism; glycerophospholipid metabolism. Catalyzes the reduction of the glycolytic intermediate dihydroxyacetone phosphate (DHAP) to sn-glycerol 3-phosphate (G3P), the key precursor for phospholipid synthesis. This Lacticaseibacillus paracasei (strain ATCC 334 / BCRC 17002 / CCUG 31169 / CIP 107868 / KCTC 3260 / NRRL B-441) (Lactobacillus paracasei) protein is Glycerol-3-phosphate dehydrogenase [NAD(P)+].